A 118-amino-acid polypeptide reads, in one-letter code: Small ribosomal subunit protein uS13 (118 aa).

The interval 94-118 is disordered; that stretch reads SLPLRGQRTKTNARTRKGPRKPIKR.

It belongs to the universal ribosomal protein uS13 family. Part of the 30S ribosomal subunit. Forms a loose heterodimer with protein S19. Forms two bridges to the 50S subunit in the 70S ribosome.

In terms of biological role, located at the top of the head of the 30S subunit, it contacts several helices of the 16S rRNA. In the 70S ribosome it contacts the 23S rRNA (bridge B1a) and protein L5 of the 50S subunit (bridge B1b), connecting the 2 subunits; these bridges are implicated in subunit movement. Contacts the tRNAs in the A and P-sites. This Photobacterium profundum (strain SS9) protein is Small ribosomal subunit protein uS13.